The sequence spans 155 residues: Leader peptidase HopD (155 aa).

Belongs to the peptidase A24 family.

This chain is Leader peptidase HopD (hopD), found in Escherichia coli.